The sequence spans 61 residues: DGYIRKRDGCKVSCLFGNEGCDKECKAYGGSYGYCWTWGLACWCEGLPDDKTWKSETNTCG.

Positions 1–61 constitute an LCN-type CS-alpha/beta domain; the sequence is DGYIRKRDGC…TWKSETNTCG (61 aa). Intrachain disulfides connect Cys-10–Cys-60, Cys-14–Cys-35, Cys-21–Cys-42, and Cys-25–Cys-44. Residue Gly-61 is modified to Glycine amide.

The protein belongs to the long (4 C-C) scorpion toxin superfamily. Sodium channel inhibitor family. Beta subfamily. As to expression, expressed by the venom gland.

The protein localises to the secreted. Functionally, depressant insect beta-toxins cause a transient contraction paralysis followed by a slow flaccid paralysis. They bind voltage-independently at site-4 of sodium channels (Nav) and shift the voltage of activation toward more negative potentials thereby affecting sodium channel activation and promoting spontaneous and repetitive firing. This toxin is active only on insects. The chain is Beta-insect depressant toxin BotIT5 from Buthus occitanus tunetanus (Common European scorpion).